The chain runs to 201 residues: Proteasome subunit beta 1 (201 aa).

Residue M1 is a propeptide, removed in mature form; by autocatalysis. T2 (nucleophile) is an active-site residue.

This sequence belongs to the peptidase T1B family. The 20S proteasome core is composed of 14 alpha and 14 beta subunits that assemble into four stacked heptameric rings, resulting in a barrel-shaped structure. The two inner rings, each composed of seven catalytic beta subunits, are sandwiched by two outer rings, each composed of seven alpha subunits. The catalytic chamber with the active sites is on the inside of the barrel. Has a gated structure, the ends of the cylinder being occluded by the N-termini of the alpha-subunits. Is capped at one or both ends by the proteasome regulatory ATPase, PAN.

It is found in the cytoplasm. It carries out the reaction Cleavage of peptide bonds with very broad specificity.. With respect to regulation, the formation of the proteasomal ATPase PAN-20S proteasome complex, via the docking of the C-termini of PAN into the intersubunit pockets in the alpha-rings, triggers opening of the gate for substrate entry. Interconversion between the open-gate and close-gate conformations leads to a dynamic regulation of the 20S proteasome proteolysis activity. Its function is as follows. Component of the proteasome core, a large protease complex with broad specificity involved in protein degradation. This Pyrobaculum calidifontis (strain DSM 21063 / JCM 11548 / VA1) protein is Proteasome subunit beta 1.